Here is a 329-residue protein sequence, read N- to C-terminus: Cytochrome f (329 aa).

The N-terminal stretch at 1-44 is a signal peptide; it reads MKRNIIFLVIHQFENLTMKKKQNIFFIFLLTVFFNFTVNSNVSA. Heme-binding residues include Tyr45, Cys65, Cys68, and His69. The helical transmembrane segment at 295 to 315 threads the bilayer; the sequence is VQGLIIFLITIFITQLFLVLK.

Belongs to the cytochrome f family. In terms of assembly, the 4 large subunits of the cytochrome b6-f complex are cytochrome b6, subunit IV (17 kDa polypeptide, petD), cytochrome f and the Rieske protein, while the 4 small subunits are PetG, PetL, PetM and PetN. The complex functions as a dimer. It depends on heme as a cofactor.

The protein localises to the plastid. Its subcellular location is the chloroplast thylakoid membrane. In terms of biological role, component of the cytochrome b6-f complex, which mediates electron transfer between photosystem II (PSII) and photosystem I (PSI), cyclic electron flow around PSI, and state transitions. This chain is Cytochrome f, found in Tupiella akineta (Green alga).